The chain runs to 292 residues: Lyso-ornithine lipid O-acyltransferase (292 aa).

Residues 11-31 (GMLLVMVSLVLMPVQILCLWL) form a helical membrane-spanning segment. Residues 258–292 (RLRGRSRSAAKGEPAPACSAAPDIPSDAQRSRLAP) form a disordered region.

It belongs to the 1-acyl-sn-glycerol-3-phosphate acyltransferase family. OlsA subfamily.

It localises to the membrane. It catalyses the reaction a lyso-ornithine lipid + a fatty acyl-[ACP] = an N(2)-[(3R)-3-(acyloxy)acyl]-L-ornithine lipid + holo-[ACP]. Its pathway is lipid metabolism. Catalyzes the second step in the formation of ornithine lipids, which are phosphorus-free membrane lipids. Uses acyl-acyl carrier protein (acyl-AcpP) as an acyl donor and converts lyso-ornithine lipid (LOL) into ornithine lipid (OL). The sequence is that of Lyso-ornithine lipid O-acyltransferase from Rhizobium meliloti (strain 1021) (Ensifer meliloti).